Reading from the N-terminus, the 426-residue chain is Serine--tRNA ligase (426 aa).

L-serine is bound at residue T233–E235. Residue R264–E266 coordinates ATP. L-serine is bound at residue E287. E351–S354 lines the ATP pocket. S387 serves as a coordination point for L-serine.

The protein belongs to the class-II aminoacyl-tRNA synthetase family. Type-1 seryl-tRNA synthetase subfamily. In terms of assembly, homodimer. The tRNA molecule binds across the dimer.

It is found in the cytoplasm. It carries out the reaction tRNA(Ser) + L-serine + ATP = L-seryl-tRNA(Ser) + AMP + diphosphate + H(+). The catalysed reaction is tRNA(Sec) + L-serine + ATP = L-seryl-tRNA(Sec) + AMP + diphosphate + H(+). The protein operates within aminoacyl-tRNA biosynthesis; selenocysteinyl-tRNA(Sec) biosynthesis; L-seryl-tRNA(Sec) from L-serine and tRNA(Sec): step 1/1. Its function is as follows. Catalyzes the attachment of serine to tRNA(Ser). Is also able to aminoacylate tRNA(Sec) with serine, to form the misacylated tRNA L-seryl-tRNA(Sec), which will be further converted into selenocysteinyl-tRNA(Sec). The polypeptide is Serine--tRNA ligase (Clostridium botulinum (strain Okra / Type B1)).